The chain runs to 211 residues: Beta-crystallin B3 (211 aa).

Met-1 carries the post-translational modification N-acetylmethionine. An N-acetylalanine; in Beta-crystallin B3, N-terminally processed modification is found at Ala-2. Positions 2–23 (AEQHGAPEQAAASKSHGGLGGS) are N-terminal arm. 2 consecutive Beta/gamma crystallin 'Greek key' domains span residues 24–63 (YKVTVYELENFQGKRCELSAECPNLTESLLQKVGSIQVES) and 64–108 (GPWL…RPLH). A connecting peptide region spans residues 109–113 (IDGPD). 2 consecutive Beta/gamma crystallin 'Greek key' domains span residues 114-155 (HKLH…RVIN) and 156-198 (GTWV…RRIR). Residues 200-211 (QKWHKRGCFLSS) are C-terminal arm.

It belongs to the beta/gamma-crystallin family. In terms of assembly, homo/heterodimer, or complexes of higher-order. The structure of beta-crystallin oligomers seems to be stabilized through interactions between the N-terminal arms.

Crystallins are the dominant structural components of the vertebrate eye lens. In Rattus norvegicus (Rat), this protein is Beta-crystallin B3 (Crybb3).